We begin with the raw amino-acid sequence, 774 residues long: Mastermind-like domain-containing protein 1 (774 aa).

7 disordered regions span residues 257-279 (STGI…SSMA), 310-365 (LAAS…PQSL), 386-421 (ALLS…QPQF), 442-473 (HLMS…QQSF), 525-609 (GMAS…QPDH), 656-678 (PQHQ…VSPS), and 755-774 (LPSC…GNDP). Over residues 331–361 (LPPPGLSPPYRPVPSPHPPPLPLPPPPPPFS) the composition is skewed to pro residues. Over residues 386 to 397 (ALLSSMTSSSNA) the composition is skewed to polar residues. Residues 574–609 (QQPTPTQASSATASSTATATLQLQQQQQQQQQQPDH) show a composition bias toward low complexity. Positions 656-669 (PQHQHGNSFTSRQD) are enriched in polar residues. Ser676 bears the Phosphoserine mark.

This sequence belongs to the mastermind family. As to expression, expressed in fetal brain, fetal ovary and fetal testis. Expressed in adult brain, ovary, skin, testis, uterus. Highly expressed in skeletal muscle.

It localises to the nucleus. Functionally, transactivates the HES3 promoter independently of NOTCH proteins. HES3 is a non-canonical NOTCH target gene which lacks binding sites for RBPJ. This is Mastermind-like domain-containing protein 1 (MAMLD1) from Homo sapiens (Human).